Consider the following 1088-residue polypeptide: DNA ligase 4 (1088 aa).

Disordered stretches follow at residues 1–56 and 73–117; these read MALS…KFND and TTTT…TTTT. 2 stretches are compositionally biased toward low complexity: residues 25-53 and 73-90; these read DFKN…YNNK and TTTT…INKT. The span at 95–105 shows a compositional bias: acidic residues; the sequence is DDIFDDEDEDS. 9 residues coordinate ATP: E414, K416, R421, E467, F514, E574, K579, K596, and K598. The N6-AMP-lysine intermediate role is filled by K416. E467 contacts Mg(2+). E574 lines the Mg(2+) pocket. 2 BRCT domains span residues 827 to 917 and 984 to 1088; these read PTQN…PKYM and CWWS…EILD.

This sequence belongs to the ATP-dependent DNA ligase family. Requires Mg(2+) as cofactor.

It is found in the nucleus. The catalysed reaction is ATP + (deoxyribonucleotide)n-3'-hydroxyl + 5'-phospho-(deoxyribonucleotide)m = (deoxyribonucleotide)n+m + AMP + diphosphate.. Its function is as follows. DNA ligase involved in DNA non-homologous end joining (NHEJ); required for double-strand break (DSB) repair. The protein is DNA ligase 4 (lig4) of Dictyostelium discoideum (Social amoeba).